The primary structure comprises 117 residues: 3',5'-cyclic-AMP phosphodiesterase 4A (117 aa).

A disordered region spans residues 42 to 79 (KQNEVEIPSPTMKDREPQEAPRQRPCQQLPPPVPHLQP). A compositionally biased stretch (basic and acidic residues) spans 53-63 (MKDREPQEAPR). The interval 78 to 117 (QPMSQITGVKRLSHNSGLNNASIPRFGVKTDQEELLAQEL) is catalytic.

This sequence belongs to the cyclic nucleotide phosphodiesterase family. PDE4 subfamily. In terms of assembly, interacts with LYN (via SH3 domain). Interacts with ARRB2. The cofactor is Zn(2+). Mg(2+) serves as cofactor. It depends on Mn(2+) as a cofactor. Proteolytically cleaved by CASP3.

Its subcellular location is the cytoplasm. It localises to the cytosol. The protein resides in the membrane. It carries out the reaction 3',5'-cyclic AMP + H2O = AMP + H(+). It functions in the pathway purine metabolism; 3',5'-cyclic AMP degradation; AMP from 3',5'-cyclic AMP: step 1/1. Hydrolyzes the second messenger 3',5'-cyclic AMP (cAMP), which is a key regulator of many important physiological processes. In Cavia porcellus (Guinea pig), this protein is 3',5'-cyclic-AMP phosphodiesterase 4A (PDE4A).